The primary structure comprises 308 residues: MANITAAMVKELREKTGAGMMDCKGALNETQGDIEAAVDWLRKKGLAKAAKKAGRVAAEGLVAVESAGHHAAVVEVNSETDFVARNDAFQAFAREAAKIALNTDGTLEGLQTAHFPGATETVSEKLQALIATIGENMNLRRVTKLEVKKGVIASYVHNQISEGLGKIGVLVALESEGDVDALSALGRQIAMHIAATNPVALDASGVDAATVERESNILREKNAGKPDHVLAKIIESGLKSYYKEVTLLEQPFVHDGSKTVSQVLKEAGSKVGGPVTLTGFVRYALGDGIEKEEGPDFATEVAQQAGRA.

Positions 80–83 (TDFV) are involved in Mg(2+) ion dislocation from EF-Tu.

The protein belongs to the EF-Ts family.

The protein resides in the cytoplasm. Its function is as follows. Associates with the EF-Tu.GDP complex and induces the exchange of GDP to GTP. It remains bound to the aminoacyl-tRNA.EF-Tu.GTP complex up to the GTP hydrolysis stage on the ribosome. The chain is Elongation factor Ts from Methylobacterium radiotolerans (strain ATCC 27329 / DSM 1819 / JCM 2831 / NBRC 15690 / NCIMB 10815 / 0-1).